Consider the following 576-residue polypeptide: TOX high mobility group box family member 3 (576 aa).

Disordered regions lie at residues 189-258, 422-443, and 519-563; these read NLGG…PQKP, TMVG…QHQM, and LQHM…QIQS. The span at 204 to 215 shows a compositional bias: low complexity; sequence ASKSATPSPSSS. A compositionally biased stretch (basic and acidic residues) spans 223 to 239; the sequence is EANRAIGEKRAAPDSGK. The span at 240–250 shows a compositional bias: basic residues; sequence KPKTPKKKKKK. The HMG box DNA-binding region spans 255–323; the sequence is PQKPVSAYAL…EYLKALAAYR (69 aa). The segment covering 428–443 has biased composition (low complexity); the sequence is PSTQVSPSVQTQQHQM. Residues 528–542 are compositionally biased toward polar residues; the sequence is PSPRQHSPVASQITS. Over residues 549–563 the composition is skewed to low complexity; it reads SPQPASQQHQSQIQS.

As to quaternary structure, homodimer. Interacts with CREB1; the interaction is not depolarization dependent. Interacts with CREBBP (via C-terminus). Interacts (via HGM box) with CITED1 (via C-terminus); the interaction increases estrogen-response element (ERE)-dependent transcription and protection against cell death. Interacts with CREB1 (phosphorylated form). Expressed mainly in epithelial cells. Expressed in the central nervous system (CNS), in the ileum and within the brain in the frontal and occipital lobe.

The protein localises to the nucleus. Functionally, transcriptional coactivator of the p300/CBP-mediated transcription complex. Activates transactivation through cAMP response element (CRE) sites. Protects against cell death by inducing antiapoptotic and repressing pro-apoptotic transcripts. Stimulates transcription from the estrogen-responsive or BCL-2 promoters. Required for depolarization-induced transcription activation of the C-FOS promoter in neurons. Associates with chromatin to the estrogen-responsive C3 promoter region. This Homo sapiens (Human) protein is TOX high mobility group box family member 3 (TOX3).